A 260-amino-acid chain; its full sequence is Transcription factor BEE 1 (260 aa).

The interval 118–139 (ETGSLRRGKRLKKKKEEEDEKE) is disordered. The bHLH domain maps to 151-201 (QATDSHSLAERVRRGKINERLRCLQDMVPGCYKAMGMATMLDEIINYVQSL).

It is found in the nucleus. In terms of biological role, positive regulator of brassinosteroid signaling. This Arabidopsis thaliana (Mouse-ear cress) protein is Transcription factor BEE 1 (BEE1).